We begin with the raw amino-acid sequence, 122 residues long: Small ribosomal subunit protein uS13 (122 aa).

The disordered stretch occupies residues 99 to 122; sequence RGQRTHTNARTRKGPAKAIAGKKK.

Belongs to the universal ribosomal protein uS13 family. Part of the 30S ribosomal subunit. Forms a loose heterodimer with protein S19. Forms two bridges to the 50S subunit in the 70S ribosome.

Its function is as follows. Located at the top of the head of the 30S subunit, it contacts several helices of the 16S rRNA. In the 70S ribosome it contacts the 23S rRNA (bridge B1a) and protein L5 of the 50S subunit (bridge B1b), connecting the 2 subunits; these bridges are implicated in subunit movement. Contacts the tRNAs in the A and P-sites. The polypeptide is Small ribosomal subunit protein uS13 (Rhodopseudomonas palustris (strain BisB5)).